Reading from the N-terminus, the 147-residue chain is Endothelial differentiation-related factor 1 homolog (147 aa).

The interval 1 to 69 (MAESDWDTVT…KLDRETEELH (69 aa)) is disordered. Residues 33–42 (RRGEEVETSK) are compositionally biased toward basic and acidic residues. Residues 46–58 (AGQNKQHTITRNT) are compositionally biased toward polar residues. A compositionally biased stretch (basic and acidic residues) spans 59–69 (AKLDRETEELH). In terms of domain architecture, HTH cro/C1-type spans 81 to 135 (IQQGRQGKGMTQKDLATKINEKPQVIADYECGKAIPNNQVMGKIERVIGLKLRGK). A DNA-binding region (H-T-H motif) is located at residues 92 to 111 (QKDLATKINEKPQVIADYEC).

It localises to the nucleus. In terms of biological role, probable transcriptional coactivator. This chain is Endothelial differentiation-related factor 1 homolog (edf1), found in Xenopus laevis (African clawed frog).